A 262-amino-acid chain; its full sequence is ATP synthase subunit a (262 aa).

7 consecutive transmembrane segments (helical) span residues 30–50 (ITSLTNIAILFIIGLLVLTIF), 64–84 (WNIVLETWVASILGIVKDQIG), 91–111 (LIYFPLIFTFFSFVFISNILG), 123–143 (ISVTLGLSIAIMIGVTLIGFS), 149–169 (FFSLFVPKGTPLALVPLLVLI), 195–215 (LFGVISMLSVSACMAVSSILL), and 220–240 (IGLPLAVLVVLYGLELLVALL).

The protein belongs to the ATPase A chain family. In terms of assembly, F-type ATPases have 2 components, CF(1) - the catalytic core - and CF(0) - the membrane proton channel. CF(1) has five subunits: alpha(3), beta(3), gamma(1), delta(1), epsilon(1). CF(0) has three main subunits: a, b and c.

Its subcellular location is the mitochondrion inner membrane. Mitochondrial membrane ATP synthase (F(1)F(0) ATP synthase or Complex V) produces ATP from ADP in the presence of a proton gradient across the membrane which is generated by electron transport complexes of the respiratory chain. F-type ATPases consist of two structural domains, F(1) - containing the extramembraneous catalytic core and F(0) - containing the membrane proton channel, linked together by a central stalk and a peripheral stalk. During catalysis, ATP synthesis in the catalytic domain of F(1) is coupled via a rotary mechanism of the central stalk subunits to proton translocation. Key component of the proton channel; it may play a direct role in the translocation of protons across the membrane. This chain is ATP synthase subunit a (ATP6), found in Allomyces arbusculus (Aquatic fungus).